A 468-amino-acid polypeptide reads, in one-letter code: Zinc finger protein 672 (468 aa).

4 consecutive C2H2-type zinc fingers follow at residues 15-37, 43-65, 71-93, and 100-123; these read YSCSVCGKSFQYSAVLLRHERAH, FRCLECGERCARASDLRVHRWTH, YICSECGQSFSHSSLLDLHLGTH, and CPCRLCGRRFPHVSALLLHRVRQH. The C2H2-type 5; degenerate zinc finger occupies 129–151; sequence HRCPLCARSFRQSALPFHLARAH. 9 C2H2-type zinc fingers span residues 167-189, 202-224, 230-252, 258-280, 286-308, 314-336, 342-364, 370-392, and 398-420; these read YHCTQCPRAFHSSAGLRNHSRIH, HRCGVCGKSFSKSSTLTRHLQRH, FKCPECGKGFLESATLVRHQRTH, YACNDCGRCFSESSTLLRHQRSH, HICATCGKGFGQRYDLVVHQRSH, FPCPECGRGFTDRSDLTKHLRTH, YHCELCGKRFTCISNLNVHLRNH, HKCPECGKSFSVASKLALHRKTH, and AECTECGKFFSHGRSLSQHQRSH.

The protein belongs to the krueppel C2H2-type zinc-finger protein family.

The protein localises to the nucleus. Functionally, may be involved in transcriptional regulation. The chain is Zinc finger protein 672 (Znf672) from Rattus norvegicus (Rat).